Here is a 122-residue protein sequence, read N- to C-terminus: MKHASFCLSSRILLLAPCRYLGTLLLLLPYPCSTLRQFLFLLRSLFIRDVEWIPAGLSHHIPYFPLASPPLTVETLLIARLLLSIKQLSLPPAKTASLSASLDAKTKGRSLLSSCSYCYMPT.

It is found in the mitochondrion. This is an uncharacterized protein from Arabidopsis thaliana (Mouse-ear cress).